The primary structure comprises 1077 residues: Teashirt homolog 1 (1077 aa).

Disordered regions lie at residues 1 to 109 (MPRR…VSYP), 139 to 195 (SGST…SSSS), and 269 to 298 (GHYRDDNRDKDSEKTKRWSKPRKRSLMEME). Acidic residues predominate over residues 26-36 (IDEEHVEDDGL). Composition is skewed to polar residues over residues 57–71 (QSYQNSPVSSATNQD) and 139–152 (SGSTTSTNDASQKE). Residues 164-195 (PVSTTGPTTSTPSTSCSSSTSHSSTTSTSSSS) are compositionally biased toward low complexity. C2H2-type zinc fingers lie at residues 246–270 (FRCKDCSAAYDTLVELTVHMNETGH) and 307–331 (LKCMYCGHSFESLQDLSVHMIKTKH). Basic and acidic residues predominate over residues 269-284 (GHYRDDNRDKDSEKTK). A C2H2-type 3; atypical zinc finger spans residues 416–440 (LKCMECGSSHDTLQQLTAHMMVTGH). Disordered regions lie at residues 467–549 (SIPL…KGGL) and 647–720 (TGKV…EPLK). Composition is skewed to basic and acidic residues over residues 496-528 (SEEKKEPEKEKPPVAGDAEKIKEESEDSLEKFE), 647-665 (TGKVNIKKEERPPEKEKSS), and 675-708 (KENKDFPKTEEVSGKPQKKGPEAETGKAKKEGPL). Serine 765 carries the phosphoserine modification. The segment at 848 to 873 (TGRLTPKSSTPSTVSEKSDADGSSFE) is disordered. The span at 853 to 862 (PKSSTPSTVS) shows a compositional bias: polar residues. The segment at residues 885 to 955 (RKGRQSNWNP…NVKYQLRRTG (71 aa)) is a DNA-binding region (homeobox; atypical). C2H2-type zinc fingers lie at residues 970–992 (FFCNDCASQFRTASTYISHLETH) and 1037–1060 (FQCKLCNRTFASKHAVKLHLSKTH).

The protein belongs to the teashirt C2H2-type zinc-finger protein family. As to quaternary structure, interacts (via homeobox domain) with APBB1 (via PID domain 1). As to expression, expressed in brain; strongly reduced in post-mortem elderly subjects with Alzheimer disease.

It localises to the nucleus. Its function is as follows. Probable transcriptional regulator involved in developmental processes. May act as a transcriptional repressor (Potential). This Homo sapiens (Human) protein is Teashirt homolog 1 (TSHZ1).